Reading from the N-terminus, the 297-residue chain is tRNA uridine(34) hydroxylase (297 aa).

The Rhodanese domain occupies 133–228 (RGEEVVFFDG…YGETFKDQGL (96 aa)). C188 acts as the Cysteine persulfide intermediate in catalysis.

It belongs to the TrhO family.

It carries out the reaction uridine(34) in tRNA + AH2 + O2 = 5-hydroxyuridine(34) in tRNA + A + H2O. In terms of biological role, catalyzes oxygen-dependent 5-hydroxyuridine (ho5U) modification at position 34 in tRNAs. The polypeptide is tRNA uridine(34) hydroxylase (Arthrobacter sp. (strain FB24)).